Consider the following 1082-residue polypeptide: MSSINTNVAEKHSYKERVNTDASSLSADGSVEAHRLTIEQVAKIFNTDIINGLSTSQANQTLKDFGANTLGDGDKISLTKIIAHQVCNAMILVLIISMVIALAIKDWISGGVIGFVVLINISVGFVQEYKAEKTMGSLRSLSSPTARVTRNGDDTTIPAEEVVPGDIVHIKVGDTVPADLRLIDLMNLETDEALLTGESLPITKNHLDVYDDYSVPIPVGDRLNLAYSSSVVSKGRGTGIVIATALDTQIGQIAKSLRNNNSVIRKVDKSNGKPKKREYSKAFCGTIKDIFYNILGINVGTPLQRKLSWLAIFLFWGCRYFCNYCNGIPKNRVNKEVAIYAICVALSMIPSALIVVLTITMAVGAQVMVMKHVIVRKLDSLEALGGINDICSDKTGTLTQGKMIARKTWIPNVGTFNVGNSNDPFNPKAGEVSFVNLSPKFIEETDEEIDFKQKLPSPFPENFNNWLLTATLANIATLNQSRDEETGELVWKAHGDATEIAIQVFTSRLNYGRDSLIENYEHLAEFPFDSSIKRMSAVYQSLQTNQIKVYTKGAVERVLNCCTHWYGHEENDELYDNQQLKELTDDDKHLIESNMNALSTQGLRVLAFATKDITNSSIDLSNRESIESNLIFQGLIGIYDPPRPETAGSVKSCHNAGINVHMLTGDHPGTAKAIAQEVGILPHNLYHYSEEVVKAMCMTANEFDSLSDDEIDKLPVLPLVIARCAPQTKVRMIEALHRRGKFVAMTGDGVNDSPSLKKADVGIAMGLNGSDVAKDASDIVLTDDNFASILNAIEEGRRMSSNIQKFVLQLLAENVAQALYLMVGLAFIDDSGLSVFPLSPVEVLWILVVTSCFPAMDLGQERASDDILEESPNSTIFTWEVIIDMIVYGFWMAVCCLVCFVIIVYGEGDPYLGVNCNKSSSSNSDVCELVFRGRSASFATMTWCALILAWECIHPYNSLFYMRQDTDHPWWKQTVIDLWDNQFLFWSVAIGFISVFPVVYIPVINTKVFLHGPIGYEWGLAVGFSILFLAGSELWKWIKRIHKRKANKKAKNPEYELERSDPFKKYASFSRSNTMDRPELMV.

Topologically, residues 1-75 (MSSINTNVAE…GANTLGDGDK (75 aa)) are cytoplasmic. Residues 76–96 (ISLTKIIAHQVCNAMILVLII) traverse the membrane as a helical segment. Residues 97–98 (SM) lie on the Extracellular side of the membrane. A helical transmembrane segment spans residues 99–119 (VIALAIKDWISGGVIGFVVLI). The Cytoplasmic segment spans residues 120–308 (NISVGFVQEY…VGTPLQRKLS (189 aa)). Residues 309-329 (WLAIFLFWGCRYFCNYCNGIP) traverse the membrane as a helical segment. The Extracellular portion of the chain corresponds to 330-336 (KNRVNKE). The chain crosses the membrane as a helical span at residues 337 to 357 (VAIYAICVALSMIPSALIVVL). The Cytoplasmic portion of the chain corresponds to 358–807 (TITMAVGAQV…RMSSNIQKFV (450 aa)). The active-site 4-aspartylphosphate intermediate is aspartate 393. Mg(2+) is bound by residues aspartate 393 and threonine 395. Positions 395, 499, 552, 604, 664, 665, 666, 723, and 729 each coordinate ATP. Aspartate 748 contributes to the Mg(2+) binding site. Asparagine 751 contributes to the ATP binding site. Residues 808–828 (LQLLAENVAQALYLMVGLAFI) form a helical membrane-spanning segment. The Extracellular portion of the chain corresponds to 829–832 (DDSG). Residues 833 to 853 (LSVFPLSPVEVLWILVVTSCF) traverse the membrane as a helical segment. Over 854–884 (PAMDLGQERASDDILEESPNSTIFTWEVIID) the chain is Cytoplasmic. Residues 885 to 905 (MIVYGFWMAVCCLVCFVIIVY) form a helical membrane-spanning segment. Topologically, residues 906 to 935 (GEGDPYLGVNCNKSSSSNSDVCELVFRGRS) are extracellular. A helical transmembrane segment spans residues 936–956 (ASFATMTWCALILAWECIHPY). At 957–983 (NSLFYMRQDTDHPWWKQTVIDLWDNQF) the chain is on the cytoplasmic side. A helical transmembrane segment spans residues 984–1004 (LFWSVAIGFISVFPVVYIPVI). Topologically, residues 1005–1007 (NTK) are extracellular. Residues 1008–1028 (VFLHGPIGYEWGLAVGFSILF) traverse the membrane as a helical segment. Over 1029–1082 (LAGSELWKWIKRIHKRKANKKAKNPEYELERSDPFKKYASFSRSNTMDRPELMV) the chain is Cytoplasmic.

This sequence belongs to the cation transport ATPase (P-type) (TC 3.A.3) family. Type IID subfamily. Mg(2+) is required as a cofactor. The active site is phosphorylated in presence of sodium or potassium and in conditions of higher pH. Not phosphorylated in presence of calcium ions.

The protein localises to the cell membrane. It catalyses the reaction Na(+)(in) + ATP + H2O = Na(+)(out) + ADP + phosphate + H(+). It carries out the reaction K(+)(in) + ATP + H2O = K(+)(out) + ADP + phosphate + H(+). Catalyzes the hydrolysis of ATP coupled with the export of sodium and potassium from the cell. May be an inefficient sodium exporter. May transport other cations such as lithium. Sodium/potassium efflux ATPases are involved in salt tolerance and maintaining the membrane potential across the plasma membrane in high salinity (Na+) or alkaline (K+) environments. In Schwanniomyces occidentalis (Yeast), this protein is Sodium/potassium exporting P-type ATPase 2.